A 181-amino-acid polypeptide reads, in one-letter code: Photosystem I assembly protein Ycf4 (181 aa).

The next 2 helical transmembrane spans lie at 19-39 and 62-82; these read YFWA…GISS and VMMF…LTII.

It belongs to the Ycf4 family.

Its subcellular location is the plastid. It localises to the chloroplast thylakoid membrane. In terms of biological role, seems to be required for the assembly of the photosystem I complex. This chain is Photosystem I assembly protein Ycf4, found in Phaeodactylum tricornutum (strain CCAP 1055/1).